Here is a 143-residue protein sequence, read N- to C-terminus: Large ribosomal subunit protein uL11 (143 aa).

This sequence belongs to the universal ribosomal protein uL11 family. As to quaternary structure, part of the ribosomal stalk of the 50S ribosomal subunit. Interacts with L10 and the large rRNA to form the base of the stalk. L10 forms an elongated spine to which L12 dimers bind in a sequential fashion forming a multimeric L10(L12)X complex. In terms of processing, one or more lysine residues are methylated.

Functionally, forms part of the ribosomal stalk which helps the ribosome interact with GTP-bound translation factors. The sequence is that of Large ribosomal subunit protein uL11 from Leifsonia xyli subsp. xyli (strain CTCB07).